The chain runs to 477 residues: Bifunctional protein HldE (477 aa).

Residues 1–318 are ribokinase; sequence MKVTLSEFER…ENAVRGRADT (318 aa). An N6-acetyllysine modification is found at K179. An ATP-binding site is contributed by 195 to 198; sequence NLSE. The active site involves D264. The interval 344-477 is cytidylyltransferase; sequence MTNGVFDILH…IKKIQQDKKG (134 aa).

In the N-terminal section; belongs to the carbohydrate kinase PfkB family. This sequence in the C-terminal section; belongs to the cytidylyltransferase family. In terms of assembly, homodimer.

The enzyme catalyses D-glycero-beta-D-manno-heptose 7-phosphate + ATP = D-glycero-beta-D-manno-heptose 1,7-bisphosphate + ADP + H(+). The catalysed reaction is D-glycero-beta-D-manno-heptose 1-phosphate + ATP + H(+) = ADP-D-glycero-beta-D-manno-heptose + diphosphate. It functions in the pathway nucleotide-sugar biosynthesis; ADP-L-glycero-beta-D-manno-heptose biosynthesis; ADP-L-glycero-beta-D-manno-heptose from D-glycero-beta-D-manno-heptose 7-phosphate: step 1/4. The protein operates within nucleotide-sugar biosynthesis; ADP-L-glycero-beta-D-manno-heptose biosynthesis; ADP-L-glycero-beta-D-manno-heptose from D-glycero-beta-D-manno-heptose 7-phosphate: step 3/4. Functionally, catalyzes the phosphorylation of D-glycero-D-manno-heptose 7-phosphate at the C-1 position to selectively form D-glycero-beta-D-manno-heptose-1,7-bisphosphate. In terms of biological role, catalyzes the ADP transfer from ATP to D-glycero-beta-D-manno-heptose 1-phosphate, yielding ADP-D-glycero-beta-D-manno-heptose. The sequence is that of Bifunctional protein HldE from Shigella boydii serotype 18 (strain CDC 3083-94 / BS512).